The following is a 159-amino-acid chain: Vesicle transport protein SFT2A (159 aa).

Over 1-36 (MEKLRRVLSGQDDEEQGLTAQVLDASSLSFNTRLKW) the chain is Cytoplasmic. A Phosphoserine modification is found at Ser-9. A helical membrane pass occupies residues 37–57 (FVICFVAGIFFSFLGTGLLWL). The Lumenal portion of the chain corresponds to 58–62 (PNGMK). The chain crosses the membrane as a helical span at residues 63-83 (LFAVFYTLGNLAALASTCFLM). Residues 84–97 (GPVKQLKKMFETTR) are Cytoplasmic-facing. A helical membrane pass occupies residues 98–118 (LLATIIMLLCLVFTLCAALWW). Topologically, residues 119 to 122 (RKKG) are lumenal. The helical transmembrane segment at 123–143 (LALLFCILQFLSMTWYSLSYI) threads the bilayer. The Cytoplasmic portion of the chain corresponds to 144–159 (PYARDAVLKCCSSLLG).

Belongs to the SFT2 family.

The protein localises to the membrane. Functionally, may be involved in fusion of retrograde transport vesicles derived from an endocytic compartment with the Golgi complex. The chain is Vesicle transport protein SFT2A from Mus musculus (Mouse).